Here is a 71-residue protein sequence, read N- to C-terminus: DNA-directed RNA polymerase subunit omega (71 aa).

It belongs to the RNA polymerase subunit omega family. The RNAP catalytic core consists of 2 alpha, 1 beta, 1 beta' and 1 omega subunit. When a sigma factor is associated with the core the holoenzyme is formed, which can initiate transcription.

The enzyme catalyses RNA(n) + a ribonucleoside 5'-triphosphate = RNA(n+1) + diphosphate. Promotes RNA polymerase assembly. Latches the N- and C-terminal regions of the beta' subunit thereby facilitating its interaction with the beta and alpha subunits. The chain is DNA-directed RNA polymerase subunit omega from Levilactobacillus brevis (strain ATCC 367 / BCRC 12310 / CIP 105137 / JCM 1170 / LMG 11437 / NCIMB 947 / NCTC 947) (Lactobacillus brevis).